A 170-amino-acid polypeptide reads, in one-letter code: Der GTPase-activating protein YihI (170 aa).

2 disordered regions span residues 1–96 (MKKP…LSPQ) and 145–170 (LSYD…RGGN). Residues 20-30 (TREELNQEARD) are compositionally biased toward basic and acidic residues. The span at 31 to 40 (RKRLKKHRGH) shows a compositional bias: basic residues. The segment covering 147–159 (YDDEEDEEEDEKQ) has biased composition (acidic residues).

The protein belongs to the YihI family. As to quaternary structure, interacts with Der.

Its function is as follows. A GTPase-activating protein (GAP) that modifies Der/EngA GTPase function. May play a role in ribosome biogenesis. In Salmonella arizonae (strain ATCC BAA-731 / CDC346-86 / RSK2980), this protein is Der GTPase-activating protein YihI.